The following is a 723-amino-acid chain: Threonine--tRNA ligase 1, cytoplasmic (723 aa).

The interval M1–E46 is disordered. Positions G14–S39 are enriched in basic and acidic residues. A Phosphoserine modification is found at S39. Residues D79–K143 enclose the TGS domain. Position 243 is an N6-acetyllysine (K243). T246 is subject to Phosphothreonine. Y298 bears the Phosphotyrosine mark. Position 453 is a phosphothreonine (T453). S702 carries the post-translational modification Phosphoserine.

It belongs to the class-II aminoacyl-tRNA synthetase family. Homodimer. ISGylated.

The protein resides in the cytoplasm. The enzyme catalyses tRNA(Thr) + L-threonine + ATP = L-threonyl-tRNA(Thr) + AMP + diphosphate + H(+). Its activity is regulated as follows. Inhibited by borrelidin (BN, IC 50 is 7 nM), which binds to 4 distinct subsites in the protein, preventing binding of all 3 substrates. Functionally, catalyzes the attachment of threonine to tRNA(Thr) in a two-step reaction: threonine is first activated by ATP to form Thr-AMP and then transferred to the acceptor end of tRNA(Thr). Also edits incorrectly charged tRNA(Thr) via its editing domain, at the post-transfer stage. The polypeptide is Threonine--tRNA ligase 1, cytoplasmic (Homo sapiens (Human)).